A 786-amino-acid polypeptide reads, in one-letter code: Endonuclease MutS2 (786 aa).

An ATP-binding site is contributed by 332–339 (GPNTGGKT). The 76-residue stretch at 711-786 (IDLRGMDSEE…GTGVTVVILK (76 aa)) folds into the Smr domain.

It belongs to the DNA mismatch repair MutS family. MutS2 subfamily. As to quaternary structure, homodimer. Binds to stalled ribosomes, contacting rRNA.

Functionally, endonuclease that is involved in the suppression of homologous recombination and thus may have a key role in the control of bacterial genetic diversity. Acts as a ribosome collision sensor, splitting the ribosome into its 2 subunits. Detects stalled/collided 70S ribosomes which it binds and splits by an ATP-hydrolysis driven conformational change. Acts upstream of the ribosome quality control system (RQC), a ribosome-associated complex that mediates the extraction of incompletely synthesized nascent chains from stalled ribosomes and their subsequent degradation. Probably generates substrates for RQC. The sequence is that of Endonuclease MutS2 from Clostridium perfringens (strain SM101 / Type A).